Reading from the N-terminus, the 515-residue chain is ATP synthase subunit alpha (515 aa).

171 to 178 (GDRQTGKT) lines the ATP pocket.

This sequence belongs to the ATPase alpha/beta chains family. In terms of assembly, F-type ATPases have 2 components, CF(1) - the catalytic core - and CF(0) - the membrane proton channel. CF(1) has five subunits: alpha(3), beta(3), gamma(1), delta(1), epsilon(1). CF(0) has three main subunits: a(1), b(2) and c(9-12). The alpha and beta chains form an alternating ring which encloses part of the gamma chain. CF(1) is attached to CF(0) by a central stalk formed by the gamma and epsilon chains, while a peripheral stalk is formed by the delta and b chains.

It is found in the cell inner membrane. It carries out the reaction ATP + H2O + 4 H(+)(in) = ADP + phosphate + 5 H(+)(out). Functionally, produces ATP from ADP in the presence of a proton gradient across the membrane. The alpha chain is a regulatory subunit. This chain is ATP synthase subunit alpha, found in Xylella fastidiosa (strain 9a5c).